Consider the following 730-residue polypeptide: Catalase-peroxidase (730 aa).

A cross-link (tryptophyl-tyrosyl-methioninium (Trp-Tyr) (with M-251)) is located at residues 92-225 (WHSAGTYRSI…LSAVHMGLIY (134 aa)). The active-site Proton acceptor is the His-93. A cross-link (tryptophyl-tyrosyl-methioninium (Tyr-Met) (with W-92)) is located at residues 225 to 251 (YVNPEGPDGIPDPVASARDIRTTFRRM). Heme b is bound at residue His-266.

The protein belongs to the peroxidase family. Peroxidase/catalase subfamily. In terms of assembly, homodimer or homotetramer. The cofactor is heme b. Formation of the three residue Trp-Tyr-Met cross-link is important for the catalase, but not the peroxidase activity of the enzyme.

Its subcellular location is the cytoplasm. It catalyses the reaction H2O2 + AH2 = A + 2 H2O. It carries out the reaction 2 H2O2 = O2 + 2 H2O. In terms of biological role, bifunctional enzyme with both catalase and broad-spectrum peroxidase activity. This chain is Catalase-peroxidase, found in Blumeria hordei (Barley powdery mildew).